The chain runs to 343 residues: MDISLFDYDLPEELIAKYPVNPRHSAKLMVLDRKSSNITHSTFWHIDEFLEEGDLLIFNDTKVLPARLLGKKKGIENSNVEILLLRHLENEKWEALVGGKNIKPGLVIEISYDFEAIVESQIEKSKFLVLLKAKNQNQIEAINKYGKIPIPPYLGRDEEPIDKEFYQTVFAKKEFSVAAPTASLHFSNELLEKLKKKVNIDFVTLHVSYGTFKPVTVQNIEEHKVDEEYIEVSESLIKNIKKTKKMCKRVIAVGTTVTRALETAIDKPYFGFTDLYIKPGFKFKVLDGFITNFHLPKSSLLILVSAFCNEENLDGREFILKSYKEAVKHKYRFYSYGDGMLIL.

It belongs to the QueA family. As to quaternary structure, monomer.

It localises to the cytoplasm. It carries out the reaction 7-aminomethyl-7-carbaguanosine(34) in tRNA + S-adenosyl-L-methionine = epoxyqueuosine(34) in tRNA + adenine + L-methionine + 2 H(+). It participates in tRNA modification; tRNA-queuosine biosynthesis. Its function is as follows. Transfers and isomerizes the ribose moiety from AdoMet to the 7-aminomethyl group of 7-deazaguanine (preQ1-tRNA) to give epoxyqueuosine (oQ-tRNA). This chain is S-adenosylmethionine:tRNA ribosyltransferase-isomerase, found in Hydrogenobaculum sp. (strain Y04AAS1).